Here is an 80-residue protein sequence, read N- to C-terminus: uncharacterized protein (80 aa).

3 helical membrane-spanning segments follow: residues 2–22 (INLWMFLALCIVCVSGYIGQV), 32–52 (FFGMVILAALIYYFTMWLTGG), and 55–75 (LVTGIFMFLAPACGLMIRFMV).

It is found in the cell membrane. This is an uncharacterized protein from Escherichia coli (strain K12).